Here is a 149-residue protein sequence, read N- to C-terminus: Aquaporin-like protein 2 (149 aa).

A disordered region spans residues 1 to 35; the sequence is MSNESNDLEKNISHLDPTGVDNAYIPPEQPETKHS. The Cytoplasmic segment spans residues 1–47; the sequence is MSNESNDLEKNISHLDPTGVDNAYIPPEQPETKHSRFNIDRGTLRNH. Residues 48 to 68 form a helical membrane-spanning segment; that stretch reads FIAAVGEFCGTFMFLWCAYVI. Topologically, residues 69 to 89 are extracellular; that stretch reads CNVANHDVALTTEPEGSHPGQ. A helical membrane pass occupies residues 90-110; sequence LIMIALGFGFSVMFSIWCFWW. Residues 111 to 149 lie on the Cytoplasmic side of the membrane; the sequence is GFEPSRFSLFVFGQSHLTSQMCSDVVSSDHCWDGCWWCR.

Belongs to the MIP/aquaporin (TC 1.A.8) family.

It localises to the endoplasmic reticulum membrane. Its subcellular location is the cell membrane. In terms of biological role, water channel required to facilitate the transport of water across membranes. Involved in freeze tolerance, osmotolerance and cell flocculation in liquid cultures. Is non-functional in most laboratory strains. In Saccharomyces cerevisiae (strain Lalvin EC1118 / Prise de mousse) (Baker's yeast), this protein is Aquaporin-like protein 2 (AQY2-2).